The sequence spans 99 residues: Aspartyl/glutamyl-tRNA(Asn/Gln) amidotransferase subunit C (99 aa).

Belongs to the GatC family. As to quaternary structure, heterotrimer of A, B and C subunits.

It carries out the reaction L-glutamyl-tRNA(Gln) + L-glutamine + ATP + H2O = L-glutaminyl-tRNA(Gln) + L-glutamate + ADP + phosphate + H(+). It catalyses the reaction L-aspartyl-tRNA(Asn) + L-glutamine + ATP + H2O = L-asparaginyl-tRNA(Asn) + L-glutamate + ADP + phosphate + 2 H(+). Allows the formation of correctly charged Asn-tRNA(Asn) or Gln-tRNA(Gln) through the transamidation of misacylated Asp-tRNA(Asn) or Glu-tRNA(Gln) in organisms which lack either or both of asparaginyl-tRNA or glutaminyl-tRNA synthetases. The reaction takes place in the presence of glutamine and ATP through an activated phospho-Asp-tRNA(Asn) or phospho-Glu-tRNA(Gln). This Leptothrix cholodnii (strain ATCC 51168 / LMG 8142 / SP-6) (Leptothrix discophora (strain SP-6)) protein is Aspartyl/glutamyl-tRNA(Asn/Gln) amidotransferase subunit C.